The sequence spans 367 residues: DNA replication and repair protein RecF (367 aa).

Glycine 30 to threonine 37 provides a ligand contact to ATP.

Belongs to the RecF family.

The protein localises to the cytoplasm. Functionally, the RecF protein is involved in DNA metabolism; it is required for DNA replication and normal SOS inducibility. RecF binds preferentially to single-stranded, linear DNA. It also seems to bind ATP. This Chlamydia caviae (strain ATCC VR-813 / DSM 19441 / 03DC25 / GPIC) (Chlamydophila caviae) protein is DNA replication and repair protein RecF.